The chain runs to 239 residues: Large ribosomal subunit protein uL2 (239 aa).

Disordered regions lie at residues 1 to 21 (MGKSLIQQRRGKGSPTFKSPS) and 203 to 239 (PFGGKEHHPGKPTTTSRRAPPGRKVGHIAARRTGRRK). Positions 222–239 (PPGRKVGHIAARRTGRRK) are enriched in basic residues.

It belongs to the universal ribosomal protein uL2 family. As to quaternary structure, part of the 50S ribosomal subunit. Forms a bridge to the 30S subunit in the 70S ribosome.

In terms of biological role, one of the primary rRNA binding proteins. Required for association of the 30S and 50S subunits to form the 70S ribosome, for tRNA binding and peptide bond formation. It has been suggested to have peptidyltransferase activity; this is somewhat controversial. Makes several contacts with the 16S rRNA in the 70S ribosome. The protein is Large ribosomal subunit protein uL2 of Pyrococcus furiosus (strain ATCC 43587 / DSM 3638 / JCM 8422 / Vc1).